Reading from the N-terminus, the 951-residue chain is Valine--tRNA ligase (951 aa).

The short motif at 42–52 (PNVTGSLHMGH) is the 'HIGH' region element. The 'KMSKS' region signature appears at 554-558 (KMSKS). Residue K557 coordinates ATP. Residues 880–944 (AGLINKEDEL…AEAKAKLIEQ (65 aa)) adopt a coiled-coil conformation.

This sequence belongs to the class-I aminoacyl-tRNA synthetase family. ValS type 1 subfamily. As to quaternary structure, monomer.

The protein localises to the cytoplasm. It catalyses the reaction tRNA(Val) + L-valine + ATP = L-valyl-tRNA(Val) + AMP + diphosphate. Its function is as follows. Catalyzes the attachment of valine to tRNA(Val). As ValRS can inadvertently accommodate and process structurally similar amino acids such as threonine, to avoid such errors, it has a 'posttransfer' editing activity that hydrolyzes mischarged Thr-tRNA(Val) in a tRNA-dependent manner. This Shigella flexneri protein is Valine--tRNA ligase.